We begin with the raw amino-acid sequence, 177 residues long: GTP-dependent dephospho-CoA kinase (177 aa).

GTP contacts are provided by aspartate 45, valine 46, valine 47, aspartate 64, and glutamate 120.

It belongs to the GTP-dependent DPCK family.

The catalysed reaction is 3'-dephospho-CoA + GTP = GDP + CoA + H(+). It participates in cofactor biosynthesis; coenzyme A biosynthesis. Its function is as follows. Catalyzes the GTP-dependent phosphorylation of the 3'-hydroxyl group of dephosphocoenzyme A to form coenzyme A (CoA). This chain is GTP-dependent dephospho-CoA kinase, found in Halobacterium salinarum (strain ATCC 29341 / DSM 671 / R1).